Here is a 437-residue protein sequence, read N- to C-terminus: Amino-acid acetyltransferase (437 aa).

In terms of domain architecture, N-acetyltransferase spans E289 to N437.

This sequence belongs to the acetyltransferase family. ArgA subfamily.

The protein localises to the cytoplasm. The catalysed reaction is L-glutamate + acetyl-CoA = N-acetyl-L-glutamate + CoA + H(+). It functions in the pathway amino-acid biosynthesis; L-arginine biosynthesis; N(2)-acetyl-L-ornithine from L-glutamate: step 1/4. The polypeptide is Amino-acid acetyltransferase (Haemophilus ducreyi (strain 35000HP / ATCC 700724)).